Consider the following 166-residue polypeptide: Transcription antitermination protein NusB (166 aa).

The segment covering Met1–Lys15 has biased composition (basic and acidic residues). A disordered region spans residues Met1 to Glu30.

The protein belongs to the NusB family.

Its function is as follows. Involved in transcription antitermination. Required for transcription of ribosomal RNA (rRNA) genes. Binds specifically to the boxA antiterminator sequence of the ribosomal RNA (rrn) operons. This is Transcription antitermination protein NusB from Pseudomonas fluorescens (strain ATCC BAA-477 / NRRL B-23932 / Pf-5).